The following is a 901-amino-acid chain: Serine/threonine-protein kinase-like protein CR4 (901 aa).

Positions 1-22 (MDIVPVVALCCCLVLLPSWAYG) are cleaved as a signal peptide. 7 tandem repeats follow at residues 31–66 (VSYGEDGPVFCGLNSDGSHLVTCFGADASVVYGAPS), 70–105 (FVGVTAGDGFACGLLLDTNQPYCWGSNSYVKIGVPQ), 123–158 (LCALRTSVKGFHSVNGDTSVIDCWGYNMTATHTVTG), 160–193 (VSAISAGSVFNCGLFARNRTVFCWGDESVSGVIG), 201–234 (FQSIGAGGYHVCGVLENAQVFCWGRSLEMQQMST), 251–285 (MVSVVGGRFHACGIRSLDHQVACWGFTLQNSTLAP), and 290–328 (VYAIVAGDYFTCGVPAETSLKPMCWGHSGPLALPMAVSP). The tract at residues 31-328 (VSYGEDGPVF…PLALPMAVSP (298 aa)) is 7 X 36 AA repeats. N-linked (GlcNAc...) asparagine glycans are attached at residues asparagine 149 and asparagine 177. A glycan (N-linked (GlcNAc...) asparagine) is linked at asparagine 280. One copy of the TNFR-Cys repeat lies at 335 to 389 (SCSHGYYEYANHGEVGSGSKTCKPANSRLCLPCSVGCPDDSYESSPCNATADRVC). 3 disulfide bridges follow: cysteine 336–cysteine 364, cysteine 367–cysteine 381, and cysteine 371–cysteine 389. Asparagine 382 carries N-linked (GlcNAc...) asparagine glycosylation. Residues 423–443 (IFVAEIAFAVILVFSVTAIAC) traverse the membrane as a helical segment. In terms of domain architecture, Protein kinase spans 504–781 (FSEDSQVGKG…KVTTALERAL (278 aa)). ATP contacts are provided by residues 510–518 (VGKGSFSCV) and lysine 532. Aspartate 633 serves as the catalytic Proton acceptor. The interval 845-901 (VTSSQRRKSSASEADMDGRTTTDGRNVGSSIGDGLRSLEEEISPASPQENLYLQHNF) is disordered. A compositionally biased stretch (polar residues) spans 889 to 901 (ASPQENLYLQHNF).

This sequence belongs to the protein kinase superfamily. Ser/Thr protein kinase family. As to quaternary structure, homodimer. In terms of processing, autophosphorylated. Specifically expressed in the epidermal cells of paleas and lemmas.

It is found in the cell membrane. It localises to the endosome. The protein resides in the multivesicular body membrane. It catalyses the reaction L-seryl-[protein] + ATP = O-phospho-L-seryl-[protein] + ADP + H(+). It carries out the reaction L-threonyl-[protein] + ATP = O-phospho-L-threonyl-[protein] + ADP + H(+). In terms of biological role, receptor protein kinase. Could play a role in a differentiation signal. Controls formative cell division in meristems. Regulates epidermal cell differentiation in many organs. During floral organogenesis, required to maintain the interlocking of the palea and lemma, and fertility. Triggers culm elongation. This Oryza sativa subsp. japonica (Rice) protein is Serine/threonine-protein kinase-like protein CR4.